Here is a 485-residue protein sequence, read N- to C-terminus: Glutamyl-tRNA(Gln) amidotransferase subunit A (485 aa).

Residues lysine 79 and serine 154 each act as charge relay system in the active site. Serine 178 (acyl-ester intermediate) is an active-site residue.

Belongs to the amidase family. GatA subfamily. Heterotrimer of A, B and C subunits.

It catalyses the reaction L-glutamyl-tRNA(Gln) + L-glutamine + ATP + H2O = L-glutaminyl-tRNA(Gln) + L-glutamate + ADP + phosphate + H(+). Allows the formation of correctly charged Gln-tRNA(Gln) through the transamidation of misacylated Glu-tRNA(Gln) in organisms which lack glutaminyl-tRNA synthetase. The reaction takes place in the presence of glutamine and ATP through an activated gamma-phospho-Glu-tRNA(Gln). The sequence is that of Glutamyl-tRNA(Gln) amidotransferase subunit A from Staphylococcus saprophyticus subsp. saprophyticus (strain ATCC 15305 / DSM 20229 / NCIMB 8711 / NCTC 7292 / S-41).